The chain runs to 498 residues: MSKRPSISFSDFAAPEKGVSIVLVAKGGGFADEAAQAAGGAEKIKRIAEISGFTGALGKTAEAIETTSSGVDKIVLVGVGEPGKLGNDDWLKIGGAAFSRIGKAERATVTLALPETTIAGDEAADLALGMILRSYKFERYKTRKNNEENGDPKHAAKISICVADPHTAKRAFEVAEAVADGVIQARNLVNEPANILGPVEFAQEAEKLEKLGVKIEVLGEKEMKKLGMGALLGVAQGSVRPPRLVIMEWQGAKSKEKPVAFVGKGVVFDTGGISIKPAAGMEDMKGDMGGAAAVTGLMRALAGRKAKVNAIGIIGLVENMPDGNAQRPGDIVTSMSGQTIEVINTDAEGRLVLADALHYTNDRFKPRFIINLATLTGAVMVALGQYHAGLFSNDDELADQLYDAGQLTGEKLWRLPLGTEYDKMIDSKFADMKNSAGRYGGSITAAQFLKRFVGETAWAHLDVAGTAMGSPANEYSQTWASGYGVRLLDRLVRDHFES.

Residues lysine 264 and aspartate 269 each coordinate Mn(2+). The active site involves lysine 276. The Mn(2+) site is built by aspartate 287, aspartate 346, and glutamate 348. Residue arginine 350 is part of the active site.

This sequence belongs to the peptidase M17 family. Requires Mn(2+) as cofactor.

Its subcellular location is the cytoplasm. It catalyses the reaction Release of an N-terminal amino acid, Xaa-|-Yaa-, in which Xaa is preferably Leu, but may be other amino acids including Pro although not Arg or Lys, and Yaa may be Pro. Amino acid amides and methyl esters are also readily hydrolyzed, but rates on arylamides are exceedingly low.. It carries out the reaction Release of an N-terminal amino acid, preferentially leucine, but not glutamic or aspartic acids.. Its function is as follows. Presumably involved in the processing and regular turnover of intracellular proteins. Catalyzes the removal of unsubstituted N-terminal amino acids from various peptides. The protein is Probable cytosol aminopeptidase of Brucella anthropi (strain ATCC 49188 / DSM 6882 / CCUG 24695 / JCM 21032 / LMG 3331 / NBRC 15819 / NCTC 12168 / Alc 37) (Ochrobactrum anthropi).